A 473-amino-acid polypeptide reads, in one-letter code: MAP kinase-activated protein kinase 5 (473 aa).

The Protein kinase domain maps to I22–L304. Residues L28–V36 and K51 each bind ATP. S115 is modified (phosphoserine; by PKA). The Proton acceptor role is filled by D148. A Phosphothreonine; by MAPK11, MAPK14, MAPK4, MAPK6 and PKA modification is found at T182. Phosphoserine occurs at positions 212 and 354. The stretch at E409–S440 forms a coiled coil.

This sequence belongs to the protein kinase superfamily. CAMK Ser/Thr protein kinase family. As to quaternary structure, interacts with SQSTM1. Interacts with ERK3/MAPK6 and ERK4/MAPK4 (via FRIEDE motif); the interaction is direct. Interacts with YWHAE; the interaction prevents phosphorylation of HSP27/HSPB1 leading to disrupt F-actin polymerization. In terms of processing, phosphorylated on Thr-182 ERK3/MAPK6 or ERK4/MAPK4; which is the regulatory phosphorylation site and is located on the T-loop/loop 12, leading to activation. Phosphorylation at Thr-182 by p38-alpha/MAPK14, p38-beta/MAPK11 is subject to debate. Phosphorylated at Ser-115 by PKA/PRKACA, leading to localization to the cytoplasm. Autophosphorylated. Expressed ubiquitously.

The protein localises to the cytoplasm. The protein resides in the nucleus. It carries out the reaction L-seryl-[protein] + ATP = O-phospho-L-seryl-[protein] + ADP + H(+). The enzyme catalyses L-threonyl-[protein] + ATP = O-phospho-L-threonyl-[protein] + ADP + H(+). Activated following phosphorylation at Thr-182 by p38-alpha/MAPK14, p38-beta/MAPK11, ERK2/MAPK1, ERK3/MAPK6, and ERK4/MAPK4. Activated by stress-related extracellular stimuli; such as H(2)O(2), arsenite, anisomycin TNF alpha and also PMA and the calcium ionophore A23187; but to a lesser extent. In vitro, activated by SQSTM1. Inhibited by diterpenoid alkaloid noroxoaconitine. Functionally, tumor suppressor serine/threonine-protein kinase involved in mTORC1 signaling and post-transcriptional regulation. Phosphorylates FOXO3, ERK3/MAPK6, ERK4/MAPK4, HSP27/HSPB1, p53/TP53 and RHEB. Acts as a tumor suppressor by mediating Ras-induced senescence and phosphorylating p53/TP53. Involved in post-transcriptional regulation of MYC by mediating phosphorylation of FOXO3: phosphorylation of FOXO3 leads to promote nuclear localization of FOXO3, enabling expression of miR-34b and miR-34c, 2 post-transcriptional regulators of MYC that bind to the 3'UTR of MYC transcript and prevent MYC translation. Acts as a negative regulator of mTORC1 signaling by mediating phosphorylation and inhibition of RHEB. Part of the atypical MAPK signaling via its interaction with ERK3/MAPK6 or ERK4/MAPK4: the precise role of the complex formed with ERK3/MAPK6 or ERK4/MAPK4 is still unclear, but the complex follows a complex set of phosphorylation events: upon interaction with atypical MAPK (ERK3/MAPK6 or ERK4/MAPK4), ERK3/MAPK6 (or ERK4/MAPK4) is phosphorylated and then mediates phosphorylation and activation of MAPKAPK5, which in turn phosphorylates ERK3/MAPK6 (or ERK4/MAPK4). Mediates phosphorylation of HSP27/HSPB1 in response to PKA/PRKACA stimulation, inducing F-actin rearrangement. This is MAP kinase-activated protein kinase 5 (Mapkapk5) from Mus musculus (Mouse).